The chain runs to 196 residues: Alpha-crystallin A chain (196 aa).

Methionine 1 bears the N-acetylmethionine mark. The interval 1–63 (MDVTIQHPWF…RTVLDSGISE (63 aa)) is required for complex formation with BFSP1 and BFSP2. Glutamine 6 carries the post-translational modification Deamidated glutamine; partial. At serine 45 the chain carries Phosphoserine. A Deamidated glutamine; partial modification is found at glutamine 50. One can recognise a sHSP domain in the interval 76-185 (HAGNPKNNPI…GHSERAIPVS (110 aa)). Residues lysine 93 and lysine 122 each carry the N6-acetyllysine modification. Zn(2+) is bound at residue histidine 123. Deamidated asparagine; partial is present on asparagine 124. 2 residues coordinate Zn(2+): glutamate 125 and histidine 130. Serine 145 bears the Phosphoserine mark. At asparagine 146 the chain carries Deamidated asparagine; partial. A disordered region spans residues 168–196 (KVQSGLDAGHSERAIPVSREEKPSSAPSS). At glutamine 170 the chain carries Deamidated glutamine; partial. The span at 176–190 (GHSERAIPVSREEKP) shows a compositional bias: basic and acidic residues. Zn(2+) is bound at residue histidine 177. Residue serine 185 is glycosylated (O-linked (GlcNAc) serine).

Belongs to the small heat shock protein (HSP20) family. In terms of assembly, heteromer composed of three CRYAA and one CRYAB subunits. Inter-subunit bridging via zinc ions enhances stability, which is crucial as there is no protein turn over in the lens. Can also form homodimers and homotetramers (dimers of dimers) which serve as the building blocks of homooligomers. Within homooligomers, the zinc-binding motif is created from residues of 3 different molecules. His-123 and Glu-125 from one molecule are ligands of the zinc ion, and His-130 and His-177 residues from additional molecules complete the site with tetrahedral coordination geometry. Part of a complex required for lens intermediate filament formation composed of BFSP1, BFSP2 and CRYAA. Acetylation at Lys-93 may increase chaperone activity. Post-translationally, undergoes age-dependent proteolytical cleavage at the C-terminus.

Its subcellular location is the cytoplasm. The protein localises to the nucleus. In terms of biological role, contributes to the transparency and refractive index of the lens. Acts as a chaperone, preventing aggregation of various proteins under a wide range of stress conditions. Required for the correct formation of lens intermediate filaments as part of a complex composed of BFSP1, BFSP2 and CRYAA. The polypeptide is Alpha-crystallin A chain (CRYAA) (Mesocricetus auratus (Golden hamster)).